Consider the following 900-residue polypeptide: Chromodomain-helicase-DNA-binding protein 1-like (900 aa).

A Helicase ATP-binding domain is found at 52 to 217 (VQCFHCQNGC…YSLLCVVEPD (166 aa)). 65 to 72 (DEMGLGKT) provides a ligand contact to ATP. Positions 168-171 (DEAH) match the DEAH box motif. Residues 345-507 (LLDRLLAFLY…QKPSAEADFQ (163 aa)) form the Helicase C-terminal domain. The residue at position 534 (serine 534) is a Phosphoserine. Positions 546–569 (PDALPAAAAAGGGSLEPEEGSELE) are disordered. Residues 606 to 640 (TLLEKTSHGGRTLRNKGSVLIPGLAEGPIKRKKIL) form a regulatory linker segment (RLS) region. Phosphoserine is present on residues serine 612, serine 623, and serine 641. The required for ATPase activity stretch occupies residues 620–678 (NKGSVLIPGLAEGPIKRKKILSPEELEDRRKKRQEAAAKRKRLMEEKRKEKEEAEHRKK). Positions 641–673 (SPEELEDRRKKRQEAAAKRKRLMEEKRKEKEEA) are disordered. Residues 643–680 (EELEDRRKKRQEAAAKRKRLMEEKRKEKEEAEHRKKMA) are a coiled coil. The segment covering 653–673 (QEAAAKRKRLMEEKRKEKEEA) has biased composition (basic and acidic residues). One can recognise a Macro domain in the interval 709–900 (SAELAYEDLD…ASSSSAPLVP (192 aa)). Phosphoserine is present on serine 894.

The protein belongs to the SNF2/RAD54 helicase family. In terms of assembly, interacts with nucleosomes; interacts with the acidic patch of histones. Interacts (via macro domain) with PARP1; interacts only when PARP1 is poly-ADP-ribosylated (PARylated). Interacts with CIAO1.

It is found in the nucleus. The protein localises to the chromosome. It catalyses the reaction ATP + H2O = ADP + phosphate + H(+). Its activity is regulated as follows. Adopts an inactive conformation in absence of DNA damage. Binding to poly-ADP-ribosylated histones activates the ATP-dependent chromatin remodeler activity. Its function is as follows. ATP-dependent chromatin remodeler that mediates chromatin-remodeling following DNA damage. Recruited to DNA damage sites through interaction with poly-ADP-ribose: specifically recognizes and binds histones that are poly-ADP-ribosylated on serine residues in response to DNA damage. Poly-ADP-ribose-binding activates the ATP-dependent chromatin remodeler activity, thereby regulating chromatin during DNA repair. Catalyzes nucleosome sliding away from DNA breaks in an ATP-dependent manner. Chromatin remodeling activity promotes PARP2 removal from chromatin. The protein is Chromodomain-helicase-DNA-binding protein 1-like (Chd1l) of Mus musculus (Mouse).